Here is a 265-residue protein sequence, read N- to C-terminus: tRNA (guanine-N(7)-)-methyltransferase (265 aa).

4 residues coordinate S-adenosyl-L-methionine: glutamate 96, glutamate 121, aspartate 148, and aspartate 170. The active site involves aspartate 170. Substrate is bound by residues lysine 174 and aspartate 206.

It belongs to the class I-like SAM-binding methyltransferase superfamily. TrmB family.

It catalyses the reaction guanosine(46) in tRNA + S-adenosyl-L-methionine = N(7)-methylguanosine(46) in tRNA + S-adenosyl-L-homocysteine. It functions in the pathway tRNA modification; N(7)-methylguanine-tRNA biosynthesis. In terms of biological role, catalyzes the formation of N(7)-methylguanine at position 46 (m7G46) in tRNA. The protein is tRNA (guanine-N(7)-)-methyltransferase of Rhodopseudomonas palustris (strain ATCC BAA-98 / CGA009).